Reading from the N-terminus, the 99-residue chain is Large ribosomal subunit protein uL23 (99 aa).

The protein belongs to the universal ribosomal protein uL23 family. In terms of assembly, part of the 50S ribosomal subunit. Contacts protein L29, and trigger factor when it is bound to the ribosome.

One of the early assembly proteins it binds 23S rRNA. One of the proteins that surrounds the polypeptide exit tunnel on the outside of the ribosome. Forms the main docking site for trigger factor binding to the ribosome. This is Large ribosomal subunit protein uL23 from Psychromonas ingrahamii (strain DSM 17664 / CCUG 51855 / 37).